The chain runs to 549 residues: Undecaprenyl phosphate-alpha-4-amino-4-deoxy-L-arabinose arabinosyl transferase 2 (549 aa).

A run of 12 helical transmembrane segments spans residues 9–29 (LLLGIFLLAYLLPLGSHGLWI), 80–102 (LFGVRFASALSTGLSVLLCFLIA), 112–132 (SFVCALLYMSFVIVAGQAGYA), 133–153 (NLDPQFTFWVNLSLVALWFAL), 176–196 (FMTKGFLAWLLPVLIALPWML), 204–224 (LLLYGPVAIAVAIIVSLPWAL), 259–279 (FYLPLLVAFSLPWVGMLPVAF), 290–310 (GIAFLGLWLLMPLLFFSLSNG), 312–332 (LPTYILPCLLPLALLLGHALA), 342–362 (ALGLNGLLNLLLGLVTLIGLV), 377–397 (SLVLVFIALTGWIISNLLQAF), and 402–422 (CWAAPAVGSLLLIALLPAALP).

It belongs to the glycosyltransferase 83 family.

It is found in the cell inner membrane. It carries out the reaction 4-amino-4-deoxy-alpha-L-arabinopyranosyl di-trans,octa-cis-undecaprenyl phosphate + lipid IVA = lipid IIA + di-trans,octa-cis-undecaprenyl phosphate.. It participates in lipopolysaccharide metabolism; 4-amino-4-deoxy-beta-L-arabinose-lipid A biosynthesis. In terms of biological role, catalyzes the transfer of the L-Ara4N moiety of the glycolipid undecaprenyl phosphate-alpha-L-Ara4N to lipid A. The modified arabinose is attached to lipid A and is required for resistance to polymyxin and cationic antimicrobial peptides. The polypeptide is Undecaprenyl phosphate-alpha-4-amino-4-deoxy-L-arabinose arabinosyl transferase 2 (Pseudomonas fluorescens (strain Pf0-1)).